We begin with the raw amino-acid sequence, 40 residues long: Peroxisomal LYS1 stabilizing protein 1 (40 aa).

Polar residues predominate over residues 1-10 (MTAKTKQSWN). A disordered region spans residues 1 to 20 (MTAKTKQSWNKGIWENGKQG).

The protein resides in the cytoplasm. It localises to the cytosol. The protein localises to the peroxisome matrix. Its function is as follows. Modulates the lysine biosynthesis pathway, possibly by stabilizing the lysine biosynthesis LYS1 protein in lysine-deplete conditions. This chain is Peroxisomal LYS1 stabilizing protein 1, found in Saccharomyces cerevisiae (strain ATCC 204508 / S288c) (Baker's yeast).